Consider the following 864-residue polypeptide: DNA double-strand break repair Rad50 ATPase (864 aa).

Residues 32–38 (NGAGKSS) and Gln-131 contribute to the ATP site. 2 coiled-coil regions span residues 176 to 319 (RELD…EKAI) and 376 to 413 (DIDK…EKNE). One can recognise a Zinc-hook domain in the interval 380 to 478 (VNSLEQKVEE…ELNKIEREYR (99 aa)). The Zn(2+) site is built by Cys-426 and Cys-429. A coiled-coil region spans residues 440-697 (KIIKEAKSYI…DREKIINAIN (258 aa)).

This sequence belongs to the SMC family. RAD50 subfamily. As to quaternary structure, homodimer. Forms a heterotetramer composed of two Mre11 subunits and two Rad50 subunits. Requires Zn(2+) as cofactor.

Functionally, part of the Rad50/Mre11 complex, which is involved in the early steps of DNA double-strand break (DSB) repair. The complex may facilitate opening of the processed DNA ends to aid in the recruitment of HerA and NurA. Rad50 controls the balance between DNA end bridging and DNA resection via ATP-dependent structural rearrangements of the Rad50/Mre11 complex. The polypeptide is DNA double-strand break repair Rad50 ATPase (Saccharolobus solfataricus (strain ATCC 35092 / DSM 1617 / JCM 11322 / P2) (Sulfolobus solfataricus)).